The following is a 197-amino-acid chain: Alkyl hydroperoxide reductase C (197 aa).

Residues 2–163 (VLVTQNAPNF…MIRMVDALDF (162 aa)) enclose the Thioredoxin domain. C50 serves as the catalytic Cysteine sulfenic acid (-SOH) intermediate.

This sequence belongs to the peroxiredoxin family. AhpC/Prx1 subfamily. Homodimer; disulfide-linked, upon oxidation. 5 homodimers assemble to form a ring-like decamer.

The protein localises to the cytoplasm. It catalyses the reaction a hydroperoxide + NADH + H(+) = an alcohol + NAD(+) + H2O. Thiol-specific peroxidase that catalyzes the reduction of hydrogen peroxide and organic hydroperoxides to water and alcohols, respectively. Plays a role in cell protection against oxidative stress by detoxifying peroxides. The chain is Alkyl hydroperoxide reductase C from Buchnera aphidicola subsp. Acyrthosiphon pisum (strain APS) (Acyrthosiphon pisum symbiotic bacterium).